The primary structure comprises 712 residues: Golgin candidate 3 (712 aa).

Positions 23–49 (DEEEDDLHKYGSANGVSNSDRRNSSGF) are disordered. The segment covering 36-49 (NGVSNSDRRNSSGF) has biased composition (polar residues). The stretch at 65–134 (AHHEIERYKA…LKEARTDISR (70 aa)) forms a coiled coil. Residues 135-150 (GSNNYAIKGNNDQSPN) show a composition bias toward polar residues. Disordered regions lie at residues 135–176 (GSNN…TDSF) and 306–347 (ESRK…MEQS). Coiled-coil stretches lie at residues 197-313 (QATE…LTNS), 340-558 (GKEE…LNRM), and 659-690 (LKDAEERERREAEEAAASKAKQDSERTRQEAA). Positions 328 to 344 (STLDKEKPESFPGKEEM) are enriched in basic and acidic residues. One can recognise a GRIP domain in the interval 557 to 608 (RMSMESDYLVDRRIVIKLLVTYFQKNHNKEVLDLMVRMLGFSEEDKERIGAA). Residues 666-712 (ERREAEEAAASKAKQDSERTRQEAALHDSEFSTVPLRSSESNQRLSR) form a disordered region. Residues 678–695 (AKQDSERTRQEAALHDSE) show a composition bias toward basic and acidic residues. Residues 696-712 (FSTVPLRSSESNQRLSR) show a composition bias toward polar residues.

Interacts with ARF1; preferentially with the active form of the protein.

Its subcellular location is the golgi apparatus. The protein localises to the endosome. Golgi matrix protein playing a role in tethering of vesicles to Golgi membranes and in maintaining the overall structure of the Golgi apparatus. This Arabidopsis thaliana (Mouse-ear cress) protein is Golgin candidate 3 (GC3).